A 484-amino-acid chain; its full sequence is Alkaline nuclease (484 aa).

This sequence belongs to the herpesviridae alkaline nuclease family. Interacts with major DNA-binding protein; this interaction increases the nuclease processivity of the alkaline exonuclease.

The protein resides in the host nucleus. Its subcellular location is the host cytoplasm. In terms of biological role, plays a role in processing non linear or branched viral DNA intermediates in order to promote the production of mature packaged unit-length linear progeny viral DNA molecules. Exhibits endonuclease and exonuclease activities and accepts both double-stranded and single-stranded DNA as substrate. Exonuclease digestion of DNA is in the 5'-&gt; 3' direction and the products are 5'-monophosphate nucleosides. Additionally, forms a recombinase with the major DNA-binding protein, which displays strand exchange activity. The polypeptide is Alkaline nuclease (Elephas maximus (Indian elephant)).